A 293-amino-acid polypeptide reads, in one-letter code: Mating-type protein A-1 (293 aa).

The alpha box DNA-binding region spans 42 to 97 (AAKKKVNGFMGFRSYYSPLFSQLPQKERSPFMTILWQHDPFHNEWDFMCSVYSSIR).

Belongs to the MATALPHA1 family.

The protein localises to the nucleus. Functionally, mating type proteins are sequence specific DNA-binding proteins that act as master switches in yeast differentiation by controlling gene expression in a cell type-specific fashion. Transcriptional activator that induces the transcription of A-specific genes like mating factor ccg-4. Required for mating as an A-cell and for blocking of heterokaryon formation (vegetative incompatibility). The chain is Mating-type protein A-1 (mtA-1) from Neurospora crassa (strain ATCC 24698 / 74-OR23-1A / CBS 708.71 / DSM 1257 / FGSC 987).